Consider the following 485-residue polypeptide: Anthranilate synthase component I-like protein (485 aa).

Residues serine 69 and 271–273 contribute to the L-tryptophan site; that span reads PFA. A chorismate-binding site is contributed by 306-307; that stretch reads GT. Residue glutamate 333 participates in Mg(2+) binding. Chorismate-binding positions include arginine 441, 455–457, and glycine 457; that span reads GAG. Glutamate 470 contributes to the Mg(2+) binding site.

Belongs to the anthranilate synthase component I family. Tetramer of two components I and two components II. Mg(2+) serves as cofactor.

It catalyses the reaction chorismate + L-glutamine = anthranilate + pyruvate + L-glutamate + H(+). Its pathway is amino-acid biosynthesis; L-tryptophan biosynthesis; L-tryptophan from chorismate: step 1/5. This Synechocystis sp. (strain ATCC 27184 / PCC 6803 / Kazusa) protein is Anthranilate synthase component I-like protein (trpE2).